The following is a 396-amino-acid chain: Obg-like ATPase 1 (396 aa).

The OBG-type G domain occupies 23-283; the sequence is LKIGIVGLPN…MSAEEKQKYL (261 aa). 32–37 contributes to the ATP binding site; the sequence is NVGKST. Serine 36 and threonine 56 together coordinate Mg(2+). Leucine 231 contacts ATP. A Nuclear export signal motif is present at residues 267-274; sequence LELKLQDM. The 84-residue stretch at 304–387 folds into the TGS domain; it reads QLEYFFTAGP…EDGDIIFFKF (84 aa).

Belongs to the TRAFAC class OBG-HflX-like GTPase superfamily. OBG GTPase family. YchF/OLA1 subfamily. In terms of assembly, monomer. Mg(2+) is required as a cofactor.

It is found in the cytoplasm. It localises to the nucleus. The protein localises to the nucleolus. Its function is as follows. Hydrolyzes ATP, and can also hydrolyze GTP with lower efficiency. Has lower affinity for GTP. The chain is Obg-like ATPase 1 from Gallus gallus (Chicken).